The following is a 475-amino-acid chain: Glucose-6-phosphate 1-dehydrogenase gcd1 (475 aa).

Residues Arg42 and Lys146 each coordinate NADP(+). D-glucose 6-phosphate is bound by residues Lys146, Glu214, and Asp233. The Proton acceptor role is filled by His238. Lys332 is a D-glucose 6-phosphate binding site. NADP(+) is bound by residues Arg342 and Arg365.

The protein belongs to the glucose-6-phosphate dehydrogenase family.

The protein localises to the cytoplasm. The enzyme catalyses D-glucose 6-phosphate + NADP(+) = 6-phospho-D-glucono-1,5-lactone + NADPH + H(+). It participates in carbohydrate degradation; pentose phosphate pathway; D-ribulose 5-phosphate from D-glucose 6-phosphate (oxidative stage): step 1/3. In terms of biological role, catalyzes the rate-limiting step of the oxidative pentose-phosphate pathway, which represents a route for the dissimilation of carbohydrates besides glycolysis. The main function of this enzyme is to provide reducing power (NADPH) and pentose phosphates for fatty acid and nucleic acid synthesis. The sequence is that of Glucose-6-phosphate 1-dehydrogenase gcd1 from Schizosaccharomyces pombe (strain 972 / ATCC 24843) (Fission yeast).